The sequence spans 210 residues: MTVWVGLTGGIGSGKSAAAQCFADLGVPRIDADAAAHSLTASDGIALPEIRRLFGDTVFDTQGLLRRDILRKEVFASPSRKALLESVMLPLIFSEIKKQQETFTDAAYGIVEIPLLTEKRQFISLIRRVLTISAPLEKRIGRVMARSGLTRGEVAAVISHQASESERLLLADDVLLNDGSLKSLREKTMRLHAFYSGIFASKPTQGKHNG.

Positions 4–202 constitute a DPCK domain; sequence WVGLTGGIGS…AFYSGIFASK (199 aa). Residue 12–17 participates in ATP binding; that stretch reads GSGKSA.

It belongs to the CoaE family.

The protein localises to the cytoplasm. The enzyme catalyses 3'-dephospho-CoA + ATP = ADP + CoA + H(+). The protein operates within cofactor biosynthesis; coenzyme A biosynthesis; CoA from (R)-pantothenate: step 5/5. Catalyzes the phosphorylation of the 3'-hydroxyl group of dephosphocoenzyme A to form coenzyme A. The sequence is that of Dephospho-CoA kinase from Neisseria meningitidis serogroup A / serotype 4A (strain DSM 15465 / Z2491).